A 195-amino-acid polypeptide reads, in one-letter code: Dehydrin DHN1 (195 aa).

Residues 1–195 (MAEYGDQYGR…IKEKLPGGHH (195 aa)) are disordered. Residues 37–48 (YGTTGTTVGYGT) show a composition bias toward low complexity. The span at 50–64 (QCVTTVTTGAQKTDQ) shows a compositional bias: polar residues. Low complexity predominate over residues 65–88 (YGTPGTTGAYGTDQYGTTGTTGEY). Basic and acidic residues-rich tracts occupy residues 136–153 (KEKI…DDQT) and 173–195 (SPEH…GGHH).

It belongs to the plant dehydrin family. Phosphorylated in vitro by CK2. Expressed in roots and leaves.

The protein localises to the cytoplasm. It is found in the nucleus. In Avicennia marina (Grey mangrove), this protein is Dehydrin DHN1.